The following is a 393-amino-acid chain: Protein TsgA (393 aa).

The next 12 membrane-spanning stretches (helical) occupy residues Trp-11 to Met-31, Phe-51 to Pro-71, Phe-78 to Leu-98, Ala-101 to Ile-121, Leu-134 to Phe-154, Trp-162 to Gly-182, Ile-206 to Ile-226, Thr-245 to Leu-265, Ile-273 to Pro-293, Ala-297 to Leu-317, Phe-332 to Val-352, and Leu-361 to Val-381.

Belongs to the major facilitator superfamily. TsgA family.

It localises to the cell inner membrane. This Escherichia coli O7:K1 (strain IAI39 / ExPEC) protein is Protein TsgA.